Reading from the N-terminus, the 181-residue chain is Lectin beta-1 and beta-2 chains (181 aa).

The Mn(2+) site is built by glutamate 119 and aspartate 121. Residues aspartate 121, phenylalanine 123, asparagine 125, and aspartate 129 each coordinate Ca(2+). The Mn(2+) site is built by aspartate 129 and histidine 136.

Belongs to the leguminous lectin family. Tetramer of two alpha and two beta chains.

This chain is Lectin beta-1 and beta-2 chains, found in Lathyrus ochrus (Cyprus-vetch).